The chain runs to 401 residues: Phosphoglycerate kinase (401 aa).

Substrate-binding positions include D24 to N26, R40, H63 to R66, R122, and R155. ATP is bound by residues K206, G297, E328, and G357–S360.

This sequence belongs to the phosphoglycerate kinase family. Monomer.

The protein resides in the cytoplasm. The enzyme catalyses (2R)-3-phosphoglycerate + ATP = (2R)-3-phospho-glyceroyl phosphate + ADP. The protein operates within carbohydrate degradation; glycolysis; pyruvate from D-glyceraldehyde 3-phosphate: step 2/5. The sequence is that of Phosphoglycerate kinase from Synechococcus sp. (strain CC9605).